Reading from the N-terminus, the 314-residue chain is MTFNQHHLLGIEELSQTEITTLLDRANVHAEAERGSRDHGHPLRGLTQINMFFENSTRTQASFEIAGKRLGADVMNMAMQTSSVKKGETLIDTALTLNAMHPDLLVVRHPHSGAVKLLADKVNCAVLNAGDGRHEHPTQALLDALTIRRAKGRLHRLNVAICGDIAHSRVARSNILLLGKMENRIRLIGTPTLMPSGVADWGVEVYDNMAEGLADCDVVMMLRLQKERMDGAFIPSEREYYHRFGLDAAKLSVAKDDAIIMHPGPMNRGVEIDGLLADDINRSVIQEQVEMGVAVRMAVMELLAENLRDRRAAA.

Carbamoyl phosphate contacts are provided by Arg58 and Thr59. Residue Lys86 participates in L-aspartate binding. Carbamoyl phosphate contacts are provided by Arg108, His136, and Gln139. L-aspartate is bound by residues Arg169 and Arg223. Carbamoyl phosphate is bound by residues Gly264 and Pro265.

It belongs to the aspartate/ornithine carbamoyltransferase superfamily. ATCase family. Heterododecamer (2C3:3R2) of six catalytic PyrB chains organized as two trimers (C3), and six regulatory PyrI chains organized as three dimers (R2).

It catalyses the reaction carbamoyl phosphate + L-aspartate = N-carbamoyl-L-aspartate + phosphate + H(+). The protein operates within pyrimidine metabolism; UMP biosynthesis via de novo pathway; (S)-dihydroorotate from bicarbonate: step 2/3. Functionally, catalyzes the condensation of carbamoyl phosphate and aspartate to form carbamoyl aspartate and inorganic phosphate, the committed step in the de novo pyrimidine nucleotide biosynthesis pathway. In Jannaschia sp. (strain CCS1), this protein is Aspartate carbamoyltransferase catalytic subunit.